We begin with the raw amino-acid sequence, 197 residues long: Holliday junction branch migration complex subunit RuvA (197 aa).

The domain I stretch occupies residues 1-64; that stretch reads MYEYIKGKYI…EDFIGVYGFL (64 aa). Residues 65 to 144 are domain II; the sequence is TKDELSMFKL…DILEEDDEQI (80 aa). Residues 145 to 149 form a flexible linker region; that stretch reads INKVT. The interval 149-197 is domain III; sequence TDDKKVLEAVAALVTLGYSEKEANKVINSCDKNNSLEQIIKEALKYLMK.

It belongs to the RuvA family. In terms of assembly, homotetramer. Forms an RuvA(8)-RuvB(12)-Holliday junction (HJ) complex. HJ DNA is sandwiched between 2 RuvA tetramers; dsDNA enters through RuvA and exits via RuvB. An RuvB hexamer assembles on each DNA strand where it exits the tetramer. Each RuvB hexamer is contacted by two RuvA subunits (via domain III) on 2 adjacent RuvB subunits; this complex drives branch migration. In the full resolvosome a probable DNA-RuvA(4)-RuvB(12)-RuvC(2) complex forms which resolves the HJ.

It localises to the cytoplasm. Functionally, the RuvA-RuvB-RuvC complex processes Holliday junction (HJ) DNA during genetic recombination and DNA repair, while the RuvA-RuvB complex plays an important role in the rescue of blocked DNA replication forks via replication fork reversal (RFR). RuvA specifically binds to HJ cruciform DNA, conferring on it an open structure. The RuvB hexamer acts as an ATP-dependent pump, pulling dsDNA into and through the RuvAB complex. HJ branch migration allows RuvC to scan DNA until it finds its consensus sequence, where it cleaves and resolves the cruciform DNA. This is Holliday junction branch migration complex subunit RuvA from Clostridium botulinum (strain Kyoto / Type A2).